Consider the following 870-residue polypeptide: Protein csx2 (870 aa).

The interval 212-251 (TSPEISDAPPLSGNVDPLPINSPPLTNPVARDIDQTEPED) is disordered. The region spanning 510 to 614 (TSAKQGLLLA…WIEAIQYSIS (105 aa)) is the PH domain. 3 positions are modified to phosphoserine: Ser625, Ser653, and Ser655. Positions 647-672 (RVASVTSPSRHNSDSKEKKQTKSPSL) are disordered. Positions 657 to 666 (HNSDSKEKKQ) are enriched in basic and acidic residues. The Arf-GAP domain occupies 670-791 (PSLVKTLKEM…RFIKSSFSHD (122 aa)). The C4-type zinc finger occupies 686–710 (CADCNTTARVEWCAINFPVVLCIDC).

The protein is Protein csx2 (csx2) of Schizosaccharomyces pombe (strain 972 / ATCC 24843) (Fission yeast).